An 88-amino-acid chain; its full sequence is Small ribosomal subunit protein bS20 (88 aa).

The span at 1-21 (MANSKSAKKRALQSEKRRQHN) shows a compositional bias: basic residues. Residues 1 to 26 (MANSKSAKKRALQSEKRRQHNASRSS) are disordered.

Belongs to the bacterial ribosomal protein bS20 family.

Functionally, binds directly to 16S ribosomal RNA. The sequence is that of Small ribosomal subunit protein bS20 from Shewanella halifaxensis (strain HAW-EB4).